Here is a 667-residue protein sequence, read N- to C-terminus: Glycine--tRNA ligase beta subunit (667 aa).

Belongs to the class-II aminoacyl-tRNA synthetase family. In terms of assembly, tetramer of two alpha and two beta subunits.

It is found in the cytoplasm. The enzyme catalyses tRNA(Gly) + glycine + ATP = glycyl-tRNA(Gly) + AMP + diphosphate. The protein is Glycine--tRNA ligase beta subunit of Rickettsia canadensis (strain McKiel).